The chain runs to 426 residues: Serine--tRNA ligase (426 aa).

L-serine is bound at residue 235-237; that stretch reads TAE. 266 to 268 contributes to the ATP binding site; it reads RRE. An L-serine-binding site is contributed by Glu-289. Position 353–356 (353–356) interacts with ATP; the sequence is EISS. Ser-389 is an L-serine binding site.

The protein belongs to the class-II aminoacyl-tRNA synthetase family. Type-1 seryl-tRNA synthetase subfamily. In terms of assembly, homodimer. The tRNA molecule binds across the dimer.

The protein resides in the cytoplasm. It catalyses the reaction tRNA(Ser) + L-serine + ATP = L-seryl-tRNA(Ser) + AMP + diphosphate + H(+). The enzyme catalyses tRNA(Sec) + L-serine + ATP = L-seryl-tRNA(Sec) + AMP + diphosphate + H(+). The protein operates within aminoacyl-tRNA biosynthesis; selenocysteinyl-tRNA(Sec) biosynthesis; L-seryl-tRNA(Sec) from L-serine and tRNA(Sec): step 1/1. Functionally, catalyzes the attachment of serine to tRNA(Ser). Is also able to aminoacylate tRNA(Sec) with serine, to form the misacylated tRNA L-seryl-tRNA(Sec), which will be further converted into selenocysteinyl-tRNA(Sec). This Nostoc sp. (strain PCC 7120 / SAG 25.82 / UTEX 2576) protein is Serine--tRNA ligase.